Reading from the N-terminus, the 343-residue chain is Heat-inducible transcription repressor HrcA (343 aa).

Belongs to the HrcA family.

Negative regulator of class I heat shock genes (grpE-dnaK-dnaJ and groELS operons). Prevents heat-shock induction of these operons. This Mycolicibacterium smegmatis (strain ATCC 700084 / mc(2)155) (Mycobacterium smegmatis) protein is Heat-inducible transcription repressor HrcA.